A 603-amino-acid polypeptide reads, in one-letter code: Threonine--tRNA ligase (603 aa).

The segment at 209–500 (DHRKLGNEMK…LIEHCAGELP (292 aa)) is catalytic. Residues C301, H352, and H477 each coordinate Zn(2+).

This sequence belongs to the class-II aminoacyl-tRNA synthetase family. Homodimer. Zn(2+) serves as cofactor.

It is found in the cytoplasm. The catalysed reaction is tRNA(Thr) + L-threonine + ATP = L-threonyl-tRNA(Thr) + AMP + diphosphate + H(+). In terms of biological role, catalyzes the attachment of threonine to tRNA(Thr) in a two-step reaction: L-threonine is first activated by ATP to form Thr-AMP and then transferred to the acceptor end of tRNA(Thr). Also edits incorrectly charged L-seryl-tRNA(Thr). The polypeptide is Threonine--tRNA ligase (Campylobacter lari (strain RM2100 / D67 / ATCC BAA-1060)).